The primary structure comprises 315 residues: Acetyl-coenzyme A carboxylase carboxyl transferase subunit alpha (315 aa).

In terms of domain architecture, CoA carboxyltransferase C-terminal spans 38-292; it reads RLQKKSNELT…KLRLKEDLAE (255 aa).

This sequence belongs to the AccA family. As to quaternary structure, acetyl-CoA carboxylase is a heterohexamer composed of biotin carboxyl carrier protein (AccB), biotin carboxylase (AccC) and two subunits each of ACCase subunit alpha (AccA) and ACCase subunit beta (AccD).

Its subcellular location is the cytoplasm. The enzyme catalyses N(6)-carboxybiotinyl-L-lysyl-[protein] + acetyl-CoA = N(6)-biotinyl-L-lysyl-[protein] + malonyl-CoA. Its pathway is lipid metabolism; malonyl-CoA biosynthesis; malonyl-CoA from acetyl-CoA: step 1/1. Its function is as follows. Component of the acetyl coenzyme A carboxylase (ACC) complex. First, biotin carboxylase catalyzes the carboxylation of biotin on its carrier protein (BCCP) and then the CO(2) group is transferred by the carboxyltransferase to acetyl-CoA to form malonyl-CoA. This Haemophilus influenzae (strain PittEE) protein is Acetyl-coenzyme A carboxylase carboxyl transferase subunit alpha.